The sequence spans 591 residues: Alternative cytochrome c oxidase subunit 1 (591 aa).

The chain crosses the membrane as a helical span at residues valine 40–serine 60. Histidine 88 contributes to the heme b binding site. 11 consecutive transmembrane segments (helical) span residues methionine 90–isoleucine 110, methionine 126–proline 146, glycine 172–leucine 192, valine 215–glycine 235, leucine 274–valine 294, valine 313–valine 333, tyrosine 337–isoleucine 357, methionine 377–leucine 397, valine 412–isoleucine 432, phenylalanine 453–leucine 473, and phenylalanine 498–valine 518. Cu cation is bound by residues histidine 280, tyrosine 284, histidine 329, and histidine 330. Positions histidine 280–tyrosine 284 form a cross-link, 1'-histidyl-3'-tyrosine (His-Tyr). Heme b-binding residues include histidine 415 and histidine 417.

This sequence belongs to the heme-copper respiratory oxidase family. As to quaternary structure, this alternate cytochrome c oxidase consists of a subunit I and two cytochromes c. Equivalents to subunit 2 and 3 are not present in this complex.

Its subcellular location is the cell membrane. The enzyme catalyses 4 Fe(II)-[cytochrome c] + O2 + 8 H(+)(in) = 4 Fe(III)-[cytochrome c] + 2 H2O + 4 H(+)(out). In terms of biological role, cytochrome c oxidase is the component of the respiratory chain that catalyzes the reduction of oxygen to water. Subunits 1-3 form the functional core of the enzyme complex. Co I is the catalytic subunit of the enzyme. Electrons originating in cytochrome c are transferred via the copper A center of subunit 2 and a low-spin heme of subunit 1 to the bimetallic center formed by a high-spin heme and copper B. This Bradyrhizobium diazoefficiens (strain JCM 10833 / BCRC 13528 / IAM 13628 / NBRC 14792 / USDA 110) protein is Alternative cytochrome c oxidase subunit 1 (coxN).